Here is a 213-residue protein sequence, read N- to C-terminus: Large ribosomal subunit protein uL3 (213 aa).

The protein belongs to the universal ribosomal protein uL3 family. Part of the 50S ribosomal subunit. Forms a cluster with proteins L14 and L19.

Its function is as follows. One of the primary rRNA binding proteins, it binds directly near the 3'-end of the 23S rRNA, where it nucleates assembly of the 50S subunit. This chain is Large ribosomal subunit protein uL3, found in Bifidobacterium longum subsp. infantis (strain ATCC 15697 / DSM 20088 / JCM 1222 / NCTC 11817 / S12).